A 316-amino-acid chain; its full sequence is tRNA dimethylallyltransferase (316 aa).

23 to 30 (GPTASGKS) is an ATP binding site. Substrate is bound at residue 25–30 (TASGKS). Residues 48–51 (DSMQ) are interaction with substrate tRNA.

This sequence belongs to the IPP transferase family. Monomer. Mg(2+) is required as a cofactor.

It carries out the reaction adenosine(37) in tRNA + dimethylallyl diphosphate = N(6)-dimethylallyladenosine(37) in tRNA + diphosphate. In terms of biological role, catalyzes the transfer of a dimethylallyl group onto the adenine at position 37 in tRNAs that read codons beginning with uridine, leading to the formation of N6-(dimethylallyl)adenosine (i(6)A). This Rhodopseudomonas palustris (strain BisB18) protein is tRNA dimethylallyltransferase.